Reading from the N-terminus, the 499-residue chain is D-alanine--D-alanyl carrier protein ligase (499 aa).

152–153 (TS) contacts ATP. D197 serves as a coordination point for D-alanine. Residues 292 to 297 (NTYGPT), D372, 384 to 387 (YQGR), and K485 contribute to the ATP site. Residue K485 coordinates D-alanine.

Belongs to the ATP-dependent AMP-binding enzyme family. DltA subfamily.

It is found in the cytoplasm. It carries out the reaction holo-[D-alanyl-carrier protein] + D-alanine + ATP = D-alanyl-[D-alanyl-carrier protein] + AMP + diphosphate. The protein operates within cell wall biogenesis; lipoteichoic acid biosynthesis. Its function is as follows. Catalyzes the first step in the D-alanylation of lipoteichoic acid (LTA), the activation of D-alanine and its transfer onto the D-alanyl carrier protein (Dcp) DltC. In an ATP-dependent two-step reaction, forms a high energy D-alanyl-AMP intermediate, followed by transfer of the D-alanyl residue as a thiol ester to the phosphopantheinyl prosthetic group of the Dcp. D-alanylation of LTA plays an important role in modulating the properties of the cell wall in Gram-positive bacteria, influencing the net charge of the cell wall. The sequence is that of D-alanine--D-alanyl carrier protein ligase from Lactococcus lactis subsp. lactis (strain IL1403) (Streptococcus lactis).